A 672-amino-acid polypeptide reads, in one-letter code: Putative sodium/calcium exchanger 7 (672 aa).

The first 23 residues, 1–23 (MAQPSILFSLTLIFLISIKSCDA), serve as a signal peptide directing secretion. 12 helical membrane passes run 88–108 (VILI…VSSA), 130–150 (VAGV…GSIA), 164–184 (LGEL…TIIL), 196–216 (IRDL…FVFY), 221–241 (LWMP…VIGA), 451–471 (LTLL…QFFL), 479–499 (PGLW…IMVF), 522–542 (IAWI…LGVV), 551–571 (GLTI…VSVV), 581–601 (AAAI…PFTI), 620–640 (LILF…VQKF), and 649–669 (VLIS…TGVL).

The protein belongs to the Ca(2+):cation antiporter (CaCA) (TC 2.A.19) family.

Its subcellular location is the membrane. This chain is Putative sodium/calcium exchanger 7 (ncx-7), found in Caenorhabditis elegans.